A 322-amino-acid chain; its full sequence is Secreted RxLR effector protein RXLR-C17 (322 aa).

An N-terminal signal peptide occupies residues 1 to 25 (MREPAFSFRLHLFAAMILLVDVFSA). Positions 43–62 (RQLRARDSQAKNYVIRDEER) match the RxLR-dEER motif. The N-linked (GlcNAc...) asparagine glycan is linked to Asn-73.

This sequence belongs to the RxLR effector family.

The protein resides in the secreted. Its subcellular location is the host cytoplasm. The protein localises to the host nucleus. Functionally, secreted effector that suppresses pattern-triggered immunity (PTI) in plant host. In Plasmopara halstedii (Downy mildew of sunflower), this protein is Secreted RxLR effector protein RXLR-C17.